The sequence spans 240 residues: Purine nucleoside phosphorylase RP494 (240 aa).

3 residues coordinate Zn(2+): His60, Cys96, and His113.

Belongs to the purine nucleoside phosphorylase YfiH/LACC1 family. As to quaternary structure, homodimer. The cofactor is Cu(2+). Zn(2+) serves as cofactor.

The enzyme catalyses adenosine + phosphate = alpha-D-ribose 1-phosphate + adenine. It catalyses the reaction S-methyl-5'-thioadenosine + phosphate = 5-(methylsulfanyl)-alpha-D-ribose 1-phosphate + adenine. It carries out the reaction inosine + phosphate = alpha-D-ribose 1-phosphate + hypoxanthine. The catalysed reaction is adenosine + H2O + H(+) = inosine + NH4(+). In terms of biological role, purine nucleoside enzyme that catalyzes the phosphorolysis of adenosine and inosine nucleosides, yielding D-ribose 1-phosphate and the respective free bases, adenine and hypoxanthine. Also catalyzes the phosphorolysis of S-methyl-5'-thioadenosine into adenine and S-methyl-5-thio-alpha-D-ribose 1-phosphate. Also has adenosine deaminase activity. This is Purine nucleoside phosphorylase RP494 from Rickettsia prowazekii (strain Madrid E).